The sequence spans 685 residues: Polyphosphate kinase (685 aa).

ATP is bound at residue asparagine 45. Mg(2+) is bound by residues arginine 375 and arginine 405. Catalysis depends on histidine 435, which acts as the Phosphohistidine intermediate. Tyrosine 468, arginine 564, and histidine 592 together coordinate ATP.

The protein belongs to the polyphosphate kinase 1 (PPK1) family. The cofactor is Mg(2+). Post-translationally, an intermediate of this reaction is the autophosphorylated ppk in which a phosphate is covalently linked to a histidine residue through a N-P bond.

The catalysed reaction is [phosphate](n) + ATP = [phosphate](n+1) + ADP. In terms of biological role, catalyzes the reversible transfer of the terminal phosphate of ATP to form a long-chain polyphosphate (polyP). This is Polyphosphate kinase from Neisseria meningitidis serogroup C (strain 053442).